Here is a 42-residue protein sequence, read N- to C-terminus: uncharacterized protein (42 aa).

A helical membrane pass occupies residues 10 to 30 (VANWVTVILMALAGYAVLALA).

The protein localises to the host membrane. This is an uncharacterized protein from Acinetobacter calcoaceticus (Arthrobacter siderocapsulatus).